Reading from the N-terminus, the 164-residue chain is Cyclic pyranopterin monophosphate synthase (164 aa).

Substrate contacts are provided by residues 75 to 77 (MCH) and 116 to 117 (ME). Asp-131 is a catalytic residue.

Belongs to the MoaC family. In terms of assembly, homohexamer; trimer of dimers.

The catalysed reaction is (8S)-3',8-cyclo-7,8-dihydroguanosine 5'-triphosphate = cyclic pyranopterin phosphate + diphosphate. The protein operates within cofactor biosynthesis; molybdopterin biosynthesis. Its function is as follows. Catalyzes the conversion of (8S)-3',8-cyclo-7,8-dihydroguanosine 5'-triphosphate to cyclic pyranopterin monophosphate (cPMP). The polypeptide is Cyclic pyranopterin monophosphate synthase (Staphylococcus aureus (strain bovine RF122 / ET3-1)).